A 312-amino-acid polypeptide reads, in one-letter code: Glycine--tRNA ligase alpha subunit (312 aa).

The protein belongs to the class-II aminoacyl-tRNA synthetase family. Tetramer of two alpha and two beta subunits.

It localises to the cytoplasm. It carries out the reaction tRNA(Gly) + glycine + ATP = glycyl-tRNA(Gly) + AMP + diphosphate. This Buchnera aphidicola subsp. Acyrthosiphon pisum (strain APS) (Acyrthosiphon pisum symbiotic bacterium) protein is Glycine--tRNA ligase alpha subunit (glyQ).